A 253-amino-acid polypeptide reads, in one-letter code: Small ribosomal subunit protein uS5 (253 aa).

A disordered region spans residues 1–30 (MAESAPRGFGRGGRGGRGRGRGRRGAKRDE). A compositionally biased stretch (basic residues) spans 14–26 (RGGRGRGRGRRGA). The S5 DRBM domain occupies 75–138 (LNDEVMKVVP…IMGKLSIMPI (64 aa)).

Belongs to the universal ribosomal protein uS5 family. As to quaternary structure, component of the small ribosomal subunit (SSU). Mature yeast ribosomes consist of a small (40S) and a large (60S) subunit. The 40S small subunit contains 1 molecule of ribosomal RNA (18S rRNA) and at least 33 different proteins. The large 60S subunit contains 3 rRNA molecules (25S, 5.8S and 5S rRNA) and at least 46 different proteins. Interacts with snoRNA U3. Interacts with MPP10. Component of the ribosomal small subunit (SSU) processome composed of at least 40 protein subunits and snoRNA U3.

The protein localises to the cytoplasm. Its function is as follows. Component of the ribosome, a large ribonucleoprotein complex responsible for the synthesis of proteins in the cell. The small ribosomal subunit (SSU) binds messenger RNAs (mRNAs) and translates the encoded message by selecting cognate aminoacyl-transfer RNA (tRNA) molecules. The large subunit (LSU) contains the ribosomal catalytic site termed the peptidyl transferase center (PTC), which catalyzes the formation of peptide bonds, thereby polymerizing the amino acids delivered by tRNAs into a polypeptide chain. The nascent polypeptides leave the ribosome through a tunnel in the LSU and interact with protein factors that function in enzymatic processing, targeting, and the membrane insertion of nascent chains at the exit of the ribosomal tunnel. Plays a role in the assembly and function of the 40S ribosomal subunit. Mutations in this protein affects the control of translational fidelity. Involved in nucleolar processing of pre-18S ribosomal RNA and ribosome assembly. Functionally, component of the ribosome, a large ribonucleoprotein complex responsible for the synthesis of proteins in the cell. The small ribosomal subunit (SSU) binds messenger RNAs (mRNAs) and translates the encoded message by selecting cognate aminoacyl-transfer RNA (tRNA) molecules. The large subunit (LSU) contains the ribosomal catalytic site termed the peptidyl transferase center (PTC), which catalyzes the formation of peptide bonds, thereby polymerizing the amino acids delivered by tRNAs into a polypeptide chain. The nascent polypeptides leave the ribosome through a tunnel in the LSU and interact with protein factors that function in enzymatic processing, targeting, and the membrane insertion of nascent chains at the exit of the ribosomal tunnel. uS5 is important for the assembly and function of the 40S ribosomal subunit. Mutations in this protein affects the control of translational fidelity. Involved in nucleolar processing of pre-18S ribosomal RNA and ribosome assembly. The sequence is that of Small ribosomal subunit protein uS5 (rps2) from Schizosaccharomyces pombe (strain 972 / ATCC 24843) (Fission yeast).